The following is a 350-amino-acid chain: Inhibitor of nuclear factor kappa-B kinase-interacting protein (350 aa).

Basic residues predominate over residues 1–11 (MSEVKSRKKSG). Residues 1–39 (MSEVKSRKKSGPKGAPAAEPGKRSEGGKTPVARSSGGGG) are disordered. Residues 46–62 (CLSLLSLGTCLGLAWFV) traverse the membrane as a helical segment. The N-linked (GlcNAc...) asparagine glycan is linked to asparagine 144. Residues 184–217 (GLVTDVISLTDSVQELENKIEKVEKNTVKNIGDL) adopt a coiled-coil conformation. N-linked (GlcNAc...) asparagine glycosylation occurs at asparagine 328.

Post-translationally, N-glycosylated. Isoform 4 is glycosylated at Asn-154. Expressed in vein endothelial cells. Isoform 4 is expressed in lung, kidney, spleen, thymus and skeletal muscle.

The protein localises to the endoplasmic reticulum membrane. Functionally, target of p53/TP53 with pro-apoptotic function. The protein is Inhibitor of nuclear factor kappa-B kinase-interacting protein (IKBIP) of Homo sapiens (Human).